The primary structure comprises 210 residues: Probable GTP-binding protein EngB (210 aa).

The EngB-type G domain occupies 27–201; the sequence is MGIEVAFAGR…HQKLDIWFSQ (175 aa). GTP is bound by residues 35–42, 62–66, 80–83, 147–150, and 180–182; these read GRSNAGKS, GRTQL, DLPG, TKAD, and FSV. Mg(2+)-binding residues include S42 and T64.

Belongs to the TRAFAC class TrmE-Era-EngA-EngB-Septin-like GTPase superfamily. EngB GTPase family. Mg(2+) serves as cofactor.

Necessary for normal cell division and for the maintenance of normal septation. In Photorhabdus laumondii subsp. laumondii (strain DSM 15139 / CIP 105565 / TT01) (Photorhabdus luminescens subsp. laumondii), this protein is Probable GTP-binding protein EngB.